Consider the following 1017-residue polypeptide: Probable isoleucine--tRNA ligase, cytoplasmic (1017 aa).

Residues 45 to 55 (PFATGLPHYGH) carry the 'HIGH' region motif. The 'KMSKS' region signature appears at 609–613 (KMSKR). Lysine 612 provides a ligand contact to ATP.

Belongs to the class-I aminoacyl-tRNA synthetase family.

Its subcellular location is the cytoplasm. It catalyses the reaction tRNA(Ile) + L-isoleucine + ATP = L-isoleucyl-tRNA(Ile) + AMP + diphosphate. The chain is Probable isoleucine--tRNA ligase, cytoplasmic from Encephalitozoon cuniculi (strain GB-M1) (Microsporidian parasite).